The chain runs to 312 residues: tRNA pseudouridine synthase B (312 aa).

Asp46 serves as the catalytic Nucleophile. Residues Tyr74, Tyr177, and Leu198 each coordinate substrate.

This sequence belongs to the pseudouridine synthase TruB family. Type 1 subfamily.

It catalyses the reaction uridine(55) in tRNA = pseudouridine(55) in tRNA. Responsible for synthesis of pseudouridine from uracil-55 in the psi GC loop of transfer RNAs. This is tRNA pseudouridine synthase B from Buchnera aphidicola subsp. Schizaphis graminum (strain Sg).